A 626-amino-acid polypeptide reads, in one-letter code: (+)-3-carene synthase 2, chloroplastic (626 aa).

The transit peptide at 1–45 (MSLISAVPLASSCVSKSLISSVREHTALRRAIATLQMSRRGKSVA) directs the protein to the chloroplast. Positions 377, 381, and 529 each coordinate Mg(2+). The short motif at 377-381 (DDMYD) is the DDXXD motif element.

It belongs to the terpene synthase family. Tpsd subfamily. It depends on Mg(2+) as a cofactor. Requires Mn(2+) as cofactor.

The protein localises to the plastid. Its subcellular location is the chloroplast. The catalysed reaction is (2E)-geranyl diphosphate = (+)-car-3-ene + diphosphate. It participates in terpene metabolism; oleoresin biosynthesis. It functions in the pathway secondary metabolite biosynthesis; terpenoid biosynthesis. In terms of biological role, monoterpene synthase (TPS) involved in the biosynthesis of monoterpene natural products included in conifer oleoresin secretions and volatile emissions; these compounds contribute to biotic and abiotic stress defense against herbivores and pathogens. Catalyzes the conversion of (2E)-geranyl diphosphate (GPP) to (+)-3-carene. The polypeptide is (+)-3-carene synthase 2, chloroplastic (Pinus banksiana (Jack pine)).